The chain runs to 132 residues: Holo-[acyl-carrier-protein] synthase (132 aa).

Mg(2+) contacts are provided by D13 and E63.

This sequence belongs to the P-Pant transferase superfamily. AcpS family. It depends on Mg(2+) as a cofactor.

Its subcellular location is the cytoplasm. It carries out the reaction apo-[ACP] + CoA = holo-[ACP] + adenosine 3',5'-bisphosphate + H(+). Functionally, transfers the 4'-phosphopantetheine moiety from coenzyme A to a Ser of acyl-carrier-protein. The sequence is that of Holo-[acyl-carrier-protein] synthase from Gloeobacter violaceus (strain ATCC 29082 / PCC 7421).